Consider the following 1447-residue polypeptide: ATP-dependent helicase SGS1 (1447 aa).

Disordered regions lie at residues 37–78 (IANK…TATK), 243–264 (KKDG…QDDN), 342–430 (KEGA…EEKE), 552–572 (KENE…LSDS), and 601–639 (TERK…FDDD). A compositionally biased stretch (polar residues) spans 59-78 (GTTNFITSIPASGPTNTATK). Over residues 243 to 253 (KKDGMSKDQSK) the composition is skewed to basic and acidic residues. The span at 254–264 (GRSQVSSQDDN) shows a compositional bias: polar residues. A compositionally biased stretch (basic and acidic residues) spans 363 to 386 (ELTRRRNMRSREPVNYRIPDRDDP). Acidic residues-rich tracts occupy residues 403–415 (EREE…EAED) and 552–561 (KENEDFEEDN). The segment covering 601–611 (TERKLTGDNEH) has biased composition (basic and acidic residues). A Helicase ATP-binding domain is found at 687-864 (VNATLQGKDV…IHNLELKEPV (178 aa)). An ATP-binding site is contributed by 714 to 721 (AVVKSGKT). The short motif at 808 to 811 (DEAH) is the DEAH box element. The Helicase C-terminal domain occupies 886–1035 (TIFEICDAVK…NKEKHLNKLQ (150 aa)). In terms of domain architecture, HRDC spans 1272–1351 (LNNLRMTYER…ADLSKKRSSE (80 aa)). A compositionally biased stretch (polar residues) spans 1402-1411 (QIRQSQLPKN). Residues 1402 to 1447 (QIRQSQLPKNTTSSKSGTRSISKSSKKSANGRRGFRNYRGHYRGRK) are disordered. Low complexity predominate over residues 1412 to 1424 (TTSSKSGTRSISK). The segment covering 1425 to 1447 (SSKKSANGRRGFRNYRGHYRGRK) has biased composition (basic residues).

This sequence belongs to the helicase family. RecQ subfamily. Heterodimer with TOP3. Forms a complex with TOP3 and RMI1. Forms a ternary complex with a MLH1-MLH3 heterodimer (MutLbeta) during meiosis. Interacts with TOP2. It depends on Mg(2+) as a cofactor.

It localises to the nucleus. The protein localises to the nucleolus. The catalysed reaction is Couples ATP hydrolysis with the unwinding of duplex DNA by translocating in the 3'-5' direction.. It catalyses the reaction ATP + H2O = ADP + phosphate + H(+). With respect to regulation, helicase activity on G-quadruplex DNA is inhibited by ATP-gamma-S. In terms of biological role, ATP-dependent 3'-5' DNA helicase able to unwind duplex DNA or DNA:RNA heteroduplex. Unwinds G-quadruplex DNA; unwinding occurs in the 3'-5' direction, requires a 3' single-stranded end of at least 7 nucleotides. Helicase activity is higher on G-quadruplex substrates than on duplex DNA substrates. Assayed with a catalytic fragment (residues 400-1268). Telomeres and rDNA are notably G-rich; formation of G-quadruplex DNA would block DNA replication and transcription. Acts as an integral component of the S-phase checkpoint response, which arrests cells due to DNA damage or blocked fork progression during DNA replication. Can create a deleterious topological substrate that TOP3 preferentially resolves. The TOP3-SGS1 protein complex may function as a eukaryotic reverse gyrase introducing positive supercoils into extrachromosomal ribosomal DNA rings. Together with topoisomerase II has a role in chromosomal segregation. Maintains rDNA structure where it has a role in re-starting stalled replication forks. This Saccharomyces cerevisiae (strain ATCC 204508 / S288c) (Baker's yeast) protein is ATP-dependent helicase SGS1.